Reading from the N-terminus, the 88-residue chain is Large ribosomal subunit protein bL27 (88 aa).

A disordered region spans residues 1 to 26; that stretch reads MAHKKGASSSSNGRDSEAKRLGVKRF.

It belongs to the bacterial ribosomal protein bL27 family.

The protein is Large ribosomal subunit protein bL27 of Corynebacterium glutamicum (strain R).